We begin with the raw amino-acid sequence, 92 residues long: UPF0358 protein SH1840 (92 aa).

The protein belongs to the UPF0358 family.

The protein is UPF0358 protein SH1840 of Staphylococcus haemolyticus (strain JCSC1435).